A 296-amino-acid polypeptide reads, in one-letter code: Probable AP endonuclease (296 aa).

C16 and C20 are disulfide-bonded. Positions 78, 115, 142, 182, 218, 231, 233, and 271 each coordinate Zn(2+).

Belongs to the AP endonuclease 2 family. The cofactor is Zn(2+).

The protein localises to the host nucleus. It localises to the host cytoplasm. It is found in the virion. Functionally, endonuclease that plays a role in DNA repair. Cleaves phosphodiester bonds on the 5' side of apurinic or apyrimidinic sites (AP sites). In addition to endonuclease activity, the ASFV enzyme has a proofreading 3'-5' exonuclease activity that is considerably more efficient in the elimination of a mismatch than in that of a correctly paired base. Displays 3'-phosphatase and 3'-repair diesterase activities. The single nucleotide gaps generated by the AP endonuclease are filled by the viral AP endonuclease and DNA ligase. In Ornithodoros (relapsing fever ticks), this protein is Probable AP endonuclease.